Reading from the N-terminus, the 622-residue chain is Solute carrier family 2, facilitated glucose transporter member 12 (622 aa).

The interval 1–26 (MVPVENTEGPNLLNQKGREAETEGSC) is disordered. Residues 1–44 (MVPVENTEGPNLLNQKGREAETEGSCGASGGGHPACAGGPSMFT) lie on the Cytoplasmic side of the membrane. The chain crosses the membrane as a helical span at residues 45–65 (FLTSVTAAISGLLVGYELGLI). The Extracellular portion of the chain corresponds to 66-84 (SGALLQIRTLLALTCHEQE). A helical transmembrane segment spans residues 85-105 (MVVSSLLIGAFLASLTGGVLI). At 106–111 (DRYGRR) the chain is on the cytoplasmic side. A helical transmembrane segment spans residues 112 to 132 (LAIILSSCLLGLGSLVLIMSL). Over 133–141 (SYTLLIMGR) the chain is Extracellular. Residues 142–162 (VAIGVSISLSSIATCVYIAEI) traverse the membrane as a helical segment. The Cytoplasmic segment spans residues 163–168 (APQHRR). A helical transmembrane segment spans residues 169-189 (GLLVSLNELMIVTGILFAYIS). The Extracellular portion of the chain corresponds to 190–201 (NYAFANISNGWK). Asn195 carries N-linked (GlcNAc...) asparagine glycosylation. Residues 202 to 222 (YMFGLVIPLGVLQAIAMYFLP) traverse the membrane as a helical segment. The Cytoplasmic segment spans residues 223–282 (PSPRFLVMKGQEESAGKVLRKLRVISDTTEELTLIKSSLKDEYQYSFWDLFRSKDNMRTR). A helical transmembrane segment spans residues 283–303 (ILIGLTLVFFVQTTGQPNILF). At 304–321 (YASTVLKSVGFQSNEAAS) the chain is on the extracellular side. Residues 322–342 (LASTGVGVVKVVSTIPATLLV) traverse the membrane as a helical segment. The Cytoplasmic portion of the chain corresponds to 343–349 (DHIGSKT). Residues 350-370 (FLCIGSSVMSASLLTMGIVNL) form a helical membrane-spanning segment. Residues 371–471 (NINMNFTNIC…PAAYKWLSLA (101 aa)) lie on the Extracellular side of the membrane. Residues Asn375, Asn387, Asn400, and Asn405 are each glycosylated (N-linked (GlcNAc...) asparagine). Residues 472–492 (SLLVYVAAFSIGLGPMPWLVL) form a helical membrane-spanning segment. Residues 493-503 (SEIFPGGIRGR) lie on the Cytoplasmic side of the membrane. The chain crosses the membrane as a helical span at residues 504–524 (AMALTSSMNWGVNLLISLTFL). Residues 525-533 (TVTDLIGLS) are Extracellular-facing. A helical transmembrane segment spans residues 534–554 (WVCFIYTIMSLASLAFVVLFI). Topologically, residues 555–622 (PETKGCSLEQ…GQSQRPSPDT (68 aa)) are cytoplasmic.

This sequence belongs to the major facilitator superfamily. Sugar transporter (TC 2.A.1.1) family. Glucose transporter subfamily. In terms of tissue distribution, expressed in skeletal muscle, heart, brain, kidney, spleen, adipose tissues and to a lesser extent in small intestine and lung.

Its subcellular location is the cell membrane. The protein localises to the endomembrane system. It is found in the cytoplasm. It localises to the perinuclear region. The catalysed reaction is D-glucose(out) = D-glucose(in). Its function is as follows. Insulin-independent facilitative glucose transporter. This is Solute carrier family 2, facilitated glucose transporter member 12 from Mus musculus (Mouse).